Here is a 159-residue protein sequence, read N- to C-terminus: Ribonuclease H (159 aa).

Residues threonine 4–glutamate 145 enclose the RNase H type-1 domain. Aspartate 13, glutamate 51, aspartate 73, and aspartate 137 together coordinate Mg(2+).

The protein belongs to the RNase H family. As to quaternary structure, monomer. Mg(2+) serves as cofactor.

Its subcellular location is the cytoplasm. The catalysed reaction is Endonucleolytic cleavage to 5'-phosphomonoester.. Endonuclease that specifically degrades the RNA of RNA-DNA hybrids. The chain is Ribonuclease H from Shewanella denitrificans (strain OS217 / ATCC BAA-1090 / DSM 15013).